The chain runs to 364 residues: Chorismate synthase (364 aa).

NADP(+)-binding residues include Arg-48 and Arg-54. Residues Arg-125–Ser-127, Asn-238–Ala-239, Gly-278, Lys-293–Ser-297, and Arg-319 each bind FMN.

This sequence belongs to the chorismate synthase family. Homotetramer. It depends on FMNH2 as a cofactor.

It carries out the reaction 5-O-(1-carboxyvinyl)-3-phosphoshikimate = chorismate + phosphate. It participates in metabolic intermediate biosynthesis; chorismate biosynthesis; chorismate from D-erythrose 4-phosphate and phosphoenolpyruvate: step 7/7. In terms of biological role, catalyzes the anti-1,4-elimination of the C-3 phosphate and the C-6 proR hydrogen from 5-enolpyruvylshikimate-3-phosphate (EPSP) to yield chorismate, which is the branch point compound that serves as the starting substrate for the three terminal pathways of aromatic amino acid biosynthesis. This reaction introduces a second double bond into the aromatic ring system. The sequence is that of Chorismate synthase from Shewanella sediminis (strain HAW-EB3).